The following is a 464-amino-acid chain: Glutathione reductase (464 aa).

Positions 17 and 18 each coordinate FAD. Residue Ser-17 participates in glutathione binding. Residue Arg-24 coordinates glutathione. FAD contacts are provided by Glu-37, Thr-45, Cys-46, and Lys-54. Cys-46 and Cys-51 are disulfide-bonded. Position 103 (Tyr-103) interacts with glutathione. Ala-119 serves as a coordination point for FAD. The NADP(+) site is built by Ala-186, Ile-189, Glu-192, Arg-209, Arg-215, and Gly-274. Asp-315 is an FAD binding site. Glu-321 is an NADP(+) binding site. Residue Thr-323 participates in FAD binding. Arg-331 contributes to the glutathione binding site. Val-354 is a binding site for NADP(+). His-453 serves as a coordination point for FAD. The Proton acceptor role is filled by His-453.

Belongs to the class-I pyridine nucleotide-disulfide oxidoreductase family. Homodimer. FAD serves as cofactor.

It localises to the cytoplasm. The protein resides in the mitochondrion. The enzyme catalyses 2 glutathione + NADP(+) = glutathione disulfide + NADPH + H(+). Catalyzes the reduction of glutathione disulfide (GSSG) to reduced glutathione (GSH). Constitutes the major mechanism to maintain a high GSH:GSSG ratio in the cytosol. In Schizosaccharomyces pombe (strain 972 / ATCC 24843) (Fission yeast), this protein is Glutathione reductase (pgr1).